Consider the following 230-residue polypeptide: MADS-box transcription factor 50 (230 aa).

One can recognise an MADS-box domain in the interval 1–61; it reads MVRGKTQMKR…GKLYEFASAS (61 aa). In terms of domain architecture, K-box spans 86–176; it reads IEQVKADADG…REKCKNQPPL (91 aa). Residues 209–230 form a disordered region; the sequence is GLPGRSRSSGGAAEDSQAMPHS.

Expressed in mature leaves and at low levels in roots and young panicles.

It localises to the nucleus. Functionally, probable transcription factor active in flowering time control. May control internode elongation and promote floral transition phase. May act upstream of the floral regulators MADS1, MADS14, MADS15 and MADS18 in the floral induction pathway. This Oryza sativa subsp. japonica (Rice) protein is MADS-box transcription factor 50 (MADS50).